Here is a 98-residue protein sequence, read N- to C-terminus: Small ribosomal subunit protein uS19 (98 aa).

A disordered region spans residues 77 to 98 (TRTFRGHAGGKAEKGGSAPRKK).

Belongs to the universal ribosomal protein uS19 family.

Protein S19 forms a complex with S13 that binds strongly to the 16S ribosomal RNA. The polypeptide is Small ribosomal subunit protein uS19 (Chlorobium limicola (strain DSM 245 / NBRC 103803 / 6330)).